Here is a 322-residue protein sequence, read N- to C-terminus: DNA-directed RNA polymerase subunit alpha (322 aa).

The tract at residues 1–229 (MNFVNNLFTL…KYFDLIFSFI (229 aa)) is alpha N-terminal domain (alpha-NTD). Residues 244-322 (NLNLKINSVY…NLNSKIEYDL (79 aa)) are alpha C-terminal domain (alpha-CTD).

This sequence belongs to the RNA polymerase alpha chain family. As to quaternary structure, homodimer. The RNAP catalytic core consists of 2 alpha, 1 beta, 1 beta' and 1 omega subunit. When a sigma factor is associated with the core the holoenzyme is formed, which can initiate transcription.

The enzyme catalyses RNA(n) + a ribonucleoside 5'-triphosphate = RNA(n+1) + diphosphate. DNA-dependent RNA polymerase catalyzes the transcription of DNA into RNA using the four ribonucleoside triphosphates as substrates. The sequence is that of DNA-directed RNA polymerase subunit alpha (rpoA) from Carsonella ruddii (strain PV).